The following is a 968-amino-acid chain: MPFALGQRWISDTESELGLGTVVQVEGRMVTVLFPATGENRMFSRAEAPLTRVTYNPGDTVESHEGWSLTIEDLTEKDGLVIYHGIHSETGEQVTLRETLLNHNIRFNKPQDRLFAGQIDRLDRFGVRYQCQMLRHKLATSDLLGLQGPRVGLIPHQMWIAHEVGRRYAPRVLLADEVGLGKTIEAGLIIHQQLLTGRAERVLVIVPDTLRHQWLVEMLRRFNLRFSVFDEDRCVEAYADHDNPFYTEQLVICSLELLRKKKRLDQALDADWDLLVVDEAHHLEWTEEAPSRAYQVVEALSEVVPGVLLLTATPDQLGHESHFARLRLLDPDRFYDYDAFLAEENSYKDVAIAAEALAGNAKLPDAAINSLTELLSEKDIAPSIRLIQADGIDSDVQQAARSELLQELLDRHGTGRVLYRNSRASVKGFPKRFFNPHPQTMPEQYLTAARVSSMMGGHKTLEAKAAQALSPEKLYQEFEDNSASWWKFDPRVDWLIAFLKSHRSKKVLIIASQAETALSLEEALRTREGIQATVFHEGMSIIERDKAGAYFAQEEGGAQALICSEIGSEGRNFQFASHLVLFDLPLNPDLLEQRIGRLDRIGQKNDIQIHLPYLEDTAQERLMQWYHQGLNAFELTCPSGHVLYAEFAEDLLNVLVGDDADELTNLLNHTQSRYKELKHAMEQGRDKLLEINSHGGDRAKAIVERLAQNDENTQLIGSVIRLWDIIGVDQEDKGENSIILRPSEHMMFPTYPGLPEDGVTVTFDRDTALSRDDIALITQEHPLVQTGLDLITGSETGTTSVAVLKNKALPAGTLFLELIYMADASAPKSSQLYRYLPPTPIRILLDKNGNDLSAKVDYASFDKQLSAVNRHIGGKLVTASQPILHPLFAKGEEYAQAAVDELVIQAREKMTTQLTGELDRLESLKAVNPNIREEELEYLRNQMQELNTYLDASQLQLDAIRMVLVSHV.

The Helicase ATP-binding domain occupies 163–332 (EVGRRYAPRV…FARLRLLDPD (170 aa)). An ATP-binding site is contributed by 176–183 (DEVGLGKT). The DEAH box motif lies at 278 to 281 (DEAH). One can recognise a Helicase C-terminal domain in the interval 491–643 (RVDWLIAFLK…ELTCPSGHVL (153 aa)).

This sequence belongs to the SNF2/RAD54 helicase family. RapA subfamily. As to quaternary structure, interacts with the RNAP. Has a higher affinity for the core RNAP than for the holoenzyme. Its ATPase activity is stimulated by binding to RNAP.

Functionally, transcription regulator that activates transcription by stimulating RNA polymerase (RNAP) recycling in case of stress conditions such as supercoiled DNA or high salt concentrations. Probably acts by releasing the RNAP, when it is trapped or immobilized on tightly supercoiled DNA. Does not activate transcription on linear DNA. Probably not involved in DNA repair. The polypeptide is RNA polymerase-associated protein RapA (Shewanella sp. (strain W3-18-1)).